Reading from the N-terminus, the 184-residue chain is Shikimate kinase (184 aa).

20 to 25 provides a ligand contact to ATP; sequence GVGKSR. A Mg(2+)-binding site is contributed by S24. The substrate site is built by D42, R66, and G88. R127 contacts ATP. R146 is a binding site for substrate. ATP is bound at residue R162.

This sequence belongs to the shikimate kinase family. Monomer. Mg(2+) is required as a cofactor.

Its subcellular location is the cytoplasm. It catalyses the reaction shikimate + ATP = 3-phosphoshikimate + ADP + H(+). The protein operates within metabolic intermediate biosynthesis; chorismate biosynthesis; chorismate from D-erythrose 4-phosphate and phosphoenolpyruvate: step 5/7. In terms of biological role, catalyzes the specific phosphorylation of the 3-hydroxyl group of shikimic acid using ATP as a cosubstrate. In Thermus thermophilus (strain ATCC 27634 / DSM 579 / HB8), this protein is Shikimate kinase.